The following is a 217-amino-acid chain: Uracil-DNA glycosylase (217 aa).

D62 functions as the Proton acceptor in the catalytic mechanism.

It belongs to the uracil-DNA glycosylase (UDG) superfamily. UNG family.

It is found in the cytoplasm. The enzyme catalyses Hydrolyzes single-stranded DNA or mismatched double-stranded DNA and polynucleotides, releasing free uracil.. Functionally, excises uracil residues from the DNA which can arise as a result of misincorporation of dUMP residues by DNA polymerase or due to deamination of cytosine. This chain is Uracil-DNA glycosylase, found in Streptococcus thermophilus (strain ATCC BAA-491 / LMD-9).